Consider the following 258-residue polypeptide: Development-specific 25 kDa protein (258 aa).

An NAD(+)-binding site is contributed by 10 to 34; it reads VYVGGFSGFGYQVCQMMMKKPMKHL. Ser138 is a substrate binding site. Tyr151 functions as the Proton acceptor in the catalytic mechanism.

The protein belongs to the short-chain dehydrogenases/reductases (SDR) family.

The chain is Development-specific 25 kDa protein from Sarcophaga peregrina (Flesh fly).